The primary structure comprises 170 residues: Flavin reductase (NADPH) (170 aa).

The protein belongs to the non-flavoprotein flavin reductase family.

It carries out the reaction reduced riboflavin + NADP(+) = riboflavin + NADPH + 2 H(+). Its function is as follows. Catalyzes the NADH-dependent reduction of FAD to provide FADH2 for the halogenase RebH. This Lentzea aerocolonigenes (Lechevalieria aerocolonigenes) protein is Flavin reductase (NADPH) (rbmH).